The chain runs to 106 residues: Urease subunit beta (106 aa).

Belongs to the urease beta subunit family. As to quaternary structure, heterotrimer of UreA (gamma), UreB (beta) and UreC (alpha) subunits. Three heterotrimers associate to form the active enzyme.

Its subcellular location is the cytoplasm. It carries out the reaction urea + 2 H2O + H(+) = hydrogencarbonate + 2 NH4(+). Its pathway is nitrogen metabolism; urea degradation; CO(2) and NH(3) from urea (urease route): step 1/1. The polypeptide is Urease subunit beta (Klebsiella pneumoniae (strain 342)).